We begin with the raw amino-acid sequence, 160 residues long: Cytochrome b6-f complex subunit 4 (160 aa).

The next 3 helical transmembrane spans lie at 36 to 56 (LLYM…GLAV), 95 to 115 (LLGV…PFIE), and 131 to 151 (TVFL…TLPI).

Belongs to the cytochrome b family. PetD subfamily. As to quaternary structure, the 4 large subunits of the cytochrome b6-f complex are cytochrome b6, subunit IV (17 kDa polypeptide, petD), cytochrome f and the Rieske protein, while the 4 small subunits are petG, petL, petM and petN. The complex functions as a dimer.

It localises to the plastid. The protein resides in the chloroplast thylakoid membrane. Functionally, component of the cytochrome b6-f complex, which mediates electron transfer between photosystem II (PSII) and photosystem I (PSI), cyclic electron flow around PSI, and state transitions. In Nephroselmis olivacea (Green alga), this protein is Cytochrome b6-f complex subunit 4.